Here is a 68-residue protein sequence, read N- to C-terminus: Guanine nucleotide-binding protein G(I)/G(S)/G(O) subunit gamma-5 (68 aa).

The residue at position 2 (serine 2) is an N-acetylserine. Serine 2 carries the post-translational modification Phosphoserine. Cysteine 65 carries the cysteine methyl ester modification. Cysteine 65 is lipidated: S-geranylgeranyl cysteine. Positions 66 to 68 (SFL) are cleaved as a propeptide — removed in mature form.

The protein belongs to the G protein gamma family. In terms of assembly, g proteins are composed of 3 units, alpha, beta and gamma. As to expression, expressed in a variety of tissues.

The protein resides in the cell membrane. Guanine nucleotide-binding proteins (G proteins) are involved as a modulator or transducer in various transmembrane signaling systems. The beta and gamma chains are required for the GTPase activity, for replacement of GDP by GTP, and for G protein-effector interaction. In Bos taurus (Bovine), this protein is Guanine nucleotide-binding protein G(I)/G(S)/G(O) subunit gamma-5 (GNG5).